The sequence spans 662 residues: Serine/threonine kinase-like domain-containing protein STKLD1 (662 aa).

One can recognise a Protein kinase domain in the interval 1 to 202; the sequence is MLNPGALGVN…ILDMATCSFL (202 aa). ATP-binding positions include 2–10 and Lys-25; that span reads LNPGALGVN. A disordered region spans residues 639-662; it reads LQEDQLEPPAGQEAPLQGEPLFRP.

Belongs to the protein kinase superfamily. Ser/Thr protein kinase family. STKL subfamily.

In Mus musculus (Mouse), this protein is Serine/threonine kinase-like domain-containing protein STKLD1 (Stkld1).